A 396-amino-acid chain; its full sequence is Argininosuccinate synthase (396 aa).

Ala-6 to Ser-14 contributes to the ATP binding site. L-citrulline is bound at residue Tyr-83. Gly-113 serves as a coordination point for ATP. The L-aspartate site is built by Thr-115, Asn-119, and Asp-120. Asn-119 is a binding site for L-citrulline. Residues Arg-123, Ser-171, Ser-180, Glu-256, and Tyr-268 each coordinate L-citrulline.

Belongs to the argininosuccinate synthase family. Type 1 subfamily. As to quaternary structure, homotetramer.

The protein resides in the cytoplasm. It carries out the reaction L-citrulline + L-aspartate + ATP = 2-(N(omega)-L-arginino)succinate + AMP + diphosphate + H(+). It functions in the pathway amino-acid biosynthesis; L-arginine biosynthesis; L-arginine from L-ornithine and carbamoyl phosphate: step 2/3. In Hyperthermus butylicus (strain DSM 5456 / JCM 9403 / PLM1-5), this protein is Argininosuccinate synthase.